A 198-amino-acid chain; its full sequence is Recombination protein RecR (198 aa).

Residues 57–72 (CSVCGHITDRDPCYIC) form a C4-type zinc finger. A Toprim domain is found at 80–175 (SVVCVVQEPK…KVTRIAHGLP (96 aa)).

It belongs to the RecR family.

May play a role in DNA repair. It seems to be involved in an RecBC-independent recombinational process of DNA repair. It may act with RecF and RecO. This is Recombination protein RecR from Bacillus mycoides (strain KBAB4) (Bacillus weihenstephanensis).